The following is a 393-amino-acid chain: Chorismate synthase (393 aa).

Positions 40 and 46 each coordinate NADP(+). Residues 129-131 (RSS), 249-250 (QA), glycine 301, 316-320 (KPIPT), and arginine 342 contribute to the FMN site.

This sequence belongs to the chorismate synthase family. Homotetramer. It depends on FMNH2 as a cofactor.

The enzyme catalyses 5-O-(1-carboxyvinyl)-3-phosphoshikimate = chorismate + phosphate. It functions in the pathway metabolic intermediate biosynthesis; chorismate biosynthesis; chorismate from D-erythrose 4-phosphate and phosphoenolpyruvate: step 7/7. Functionally, catalyzes the anti-1,4-elimination of the C-3 phosphate and the C-6 proR hydrogen from 5-enolpyruvylshikimate-3-phosphate (EPSP) to yield chorismate, which is the branch point compound that serves as the starting substrate for the three terminal pathways of aromatic amino acid biosynthesis. This reaction introduces a second double bond into the aromatic ring system. This chain is Chorismate synthase, found in Geotalea uraniireducens (strain Rf4) (Geobacter uraniireducens).